Reading from the N-terminus, the 305-residue chain is Transmembrane epididymal protein 1A (305 aa).

Residues 4–24 (FIGHISPGLFLVFYGLYQAVI) form a helical membrane-spanning segment. Residue N32 is glycosylated (N-linked (GlcNAc...) asparagine). Transmembrane regions (helical) follow at residues 54-74 (IAHA…YEIS), 124-144 (CVLL…LLLV), 159-179 (SLLI…LWAP), 187-207 (IETF…FILF), and 223-243 (IMFV…CMLG). Residues 285–305 (EQQDKDDQAPLLSKISPCDRA) form a disordered region.

This sequence belongs to the TMEM45 family.

It localises to the membrane. This is Transmembrane epididymal protein 1A from Mus musculus (Mouse).